A 283-amino-acid chain; its full sequence is MERSPAVAGQFYPADPEELRKMIEWCFRHELGPGDLPETNDGPCTLPGVVAPHAGYQFSGPVAAHTYKVLAESGTPETVVILGPNHTGLGSAVATMTDGAWRTPLGSVEIDSEFATALVRKCGVMDDDLTAHANEHSIEVQLPFLQYVYGESFRFVPVCMAMHDLQTAREVGEAIVDVAEELDRNTVVIASTDFTHYEPHDQAQKKDRKVIERITALDEAGMIEIVERYNVSMCGVGPTAATIVAVKAMGASEGELLKYATSGDVSGDYSQVVGYAAIVFRRG.

This sequence belongs to the MEMO1 family.

This Methanopyrus kandleri (strain AV19 / DSM 6324 / JCM 9639 / NBRC 100938) protein is MEMO1 family protein MK0963.